The following is a 1203-amino-acid chain: Probable phospholipid-transporting ATPase 11 (1203 aa).

Residues 1 to 71 (MTKCRRRRLH…STKYTLASFI (71 aa)) lie on the Cytoplasmic side of the membrane. A helical membrane pass occupies residues 72 to 93 (PKSLFEQFRRVANFYFLVTGVL). Topologically, residues 94 to 97 (SLTA) are extracellular. Residues 98–120 (LSPYSPISALLPLTFVIAASMVK) form a helical membrane-spanning segment. Over 121 to 303 (EAIEDWGRKK…SRIERKMDKI (183 aa)) the chain is Cytoplasmic. A helical transmembrane segment spans residues 304–325 (IYLMFGVVFLMSFIGSIVFGIE). Residues 326–363 (TREDRVRNGGRTERWYLRPDNADIFFDPDRAPMAAVYH) are Extracellular-facing. A helical membrane pass occupies residues 364–381 (FFTAVMLYSYFIPISLYV). The Cytoplasmic portion of the chain corresponds to 382-921 (SIEIVKVLQS…HGHWCYSRIS (540 aa)). Asp-429 acts as the 4-aspartylphosphate intermediate in catalysis. Positions 866 and 870 each coordinate Mg(2+). The chain crosses the membrane as a helical span at residues 922–941 (SMICYFFYKNITFGVTVFLY). The Extracellular segment spans residues 942–955 (EAYTSFSAQPAYND). Residues 956–975 (WFLSLFNVFFSSLPVIALGV) form a helical membrane-spanning segment. At 976 to 1005 (FDQDVSARYCYKFPLLYQEGVQNLLFSWKR) the chain is on the cytoplasmic side. Residues 1006-1028 (IIGWMFNGVFTALAIFFLCKESL) traverse the membrane as a helical segment. The Extracellular portion of the chain corresponds to 1029-1041 (KHQLYNPNGKTAG). Residues 1042 to 1064 (REILGGTMYTCVVWVVNLQMALA) traverse the membrane as a helical segment. At 1065–1070 (ISYFTW) the chain is on the cytoplasmic side. The helical transmembrane segment at 1071-1091 (LQHIVIWGSVAFWYIFLMIYG) threads the bilayer. The Extracellular segment spans residues 1092–1108 (AITPSFSTDAYKVFIEA). The helical transmembrane segment at 1109 to 1133 (LAPAPSYWLTTLFVMFFALIPFFVF) threads the bilayer. Topologically, residues 1134 to 1203 (KSVQMRFFPG…DQLNKNFIAF (70 aa)) are cytoplasmic.

This sequence belongs to the cation transport ATPase (P-type) (TC 3.A.3) family. Type IV subfamily.

It is found in the membrane. It catalyses the reaction ATP + H2O + phospholipidSide 1 = ADP + phosphate + phospholipidSide 2.. Its function is as follows. Involved in transport of phospholipids. This chain is Probable phospholipid-transporting ATPase 11, found in Arabidopsis thaliana (Mouse-ear cress).